A 522-amino-acid polypeptide reads, in one-letter code: Signal transduction histidine-protein kinase/phosphatase MprB (522 aa).

Residues 1–30 (MIRLYRPQRPPLRAPLRATPSLSLRWRVML) are Cytoplasmic-facing. The helical transmembrane segment at 31–51 (LAMSMVAMVVVLMAFAVYAVI) threads the bilayer. Topologically, residues 52–167 (SAALYSDIDN…PTEAVMNKLR (116 aa)) are extracellular. Residues 168 to 188 (WVLLIVGGVGVAVAAVAGGMV) traverse the membrane as a helical segment. Over 189 to 522 (TRAGLRPVAR…SVDSQSARAR (334 aa)) the chain is Cytoplasmic. The 53-residue stretch at 190–242 (RAGLRPVARLTEAAERVARTDDLRPIPVFGSDELARLTESFNLMLRALAESRE) folds into the HAMP domain. The Histidine kinase domain maps to 250–470 (DAGHELRTPL…SFYVLLPGRS (221 aa)). Histidine 253 is modified (phosphohistidine; by autocatalysis). The disordered stretch occupies residues 467-522 (PGRSLPPAGHSTPAGESETDQAEAATDPAVPVAGDTANSRESANVISVDSQSARAR). Residues 502–522 (TANSRESANVISVDSQSARAR) show a composition bias toward polar residues.

Requires Mg(2+) as cofactor. It depends on Mn(2+) as a cofactor. In terms of processing, autophosphorylated.

It is found in the cell membrane. The enzyme catalyses ATP + protein L-histidine = ADP + protein N-phospho-L-histidine.. In terms of biological role, member of the two-component regulatory system MprB/MprA which contributes to maintaining a balance among several systems involved in stress resistance and is required for establishment and maintenance of persistent infection in the host. In response to environmental signals MprB acts both as a membrane-associated protein kinase that undergoes autophosphorylation and subsequently transfers the phosphate to MprA, and a protein phosphatase that dephosphorylates phospho-MprA. The chain is Signal transduction histidine-protein kinase/phosphatase MprB (mprB) from Mycolicibacterium paratuberculosis (strain ATCC BAA-968 / K-10) (Mycobacterium paratuberculosis).